The sequence spans 335 residues: Zinc transporter ZIP11 (335 aa).

The next 7 helical transmembrane spans lie at Leu-12–Phe-32, Leu-44–Val-64, Gly-72–Val-92, Ile-187–Val-207, Phe-256–Val-278, Val-283–Met-300, and Leu-315–Gly-335.

It belongs to the ZIP transporter (TC 2.A.5) family.

It localises to the cell membrane. It is found in the nucleus. The protein resides in the cytoplasm. Its subcellular location is the golgi apparatus. The enzyme catalyses Zn(2+)(in) = Zn(2+)(out). The catalysed reaction is Cu(2+)(in) = Cu(2+)(out). In terms of biological role, zinc importer that regulates cytosolic zinc concentrations either via zinc influx from the extracellular compartment or efflux from intracellular organelles such as Golgi apparatus. May transport copper ions as well. The transport mechanism remains to be elucidated. The chain is Zinc transporter ZIP11 (Slc39a11) from Rattus norvegicus (Rat).